Here is a 551-residue protein sequence, read N- to C-terminus: Glucose-6-phosphate isomerase (551 aa).

The Proton donor role is filled by Glu-352. Catalysis depends on residues His-383 and Lys-511.

Belongs to the GPI family.

The protein resides in the cytoplasm. The catalysed reaction is alpha-D-glucose 6-phosphate = beta-D-fructose 6-phosphate. It functions in the pathway carbohydrate biosynthesis; gluconeogenesis. Its pathway is carbohydrate degradation; glycolysis; D-glyceraldehyde 3-phosphate and glycerone phosphate from D-glucose: step 2/4. Its function is as follows. Catalyzes the reversible isomerization of glucose-6-phosphate to fructose-6-phosphate. This Chlorobium luteolum (strain DSM 273 / BCRC 81028 / 2530) (Pelodictyon luteolum) protein is Glucose-6-phosphate isomerase.